Reading from the N-terminus, the 225-residue chain is Transcription factor HES-7 (225 aa).

One can recognise a bHLH domain in the interval 12-69; that stretch reads GPKMLKPLVEKRRRDRINRSLEELRLLLLERTRDQNLRNPKLEKAEILEFAVGYLRER. An Orange domain is found at 92–122; the sequence is YLSGFRECLLRLAAFAHDASPAARAQLFSAL. The tract at residues 125–225 is disordered; sequence YLRPKPPRPK…PPPAFWRPWP (101 aa). Over residues 147–158 the composition is skewed to low complexity; that stretch reads LDPAAPALGPAL. Residues 212–225 show a composition bias toward pro residues; sequence APLPPPPAFWRPWP. The short motif at 221-224 is the WRPW motif element; it reads WRPW.

As to quaternary structure, transcription repression requires formation of a complex with a corepressor protein of the Groucho/TLE family.

It localises to the nucleus. In terms of biological role, transcriptional repressor. Represses transcription from both N box- and E box-containing promoters. May with HES1, cooperatively regulate somite formation in the presomitic mesoderm (PSM). May function as a segmentation clock, which is essential for coordinated somite segmentation. The protein is Transcription factor HES-7 (HES7) of Homo sapiens (Human).